The following is a 519-amino-acid chain: S-type anion channel SLAH2 (519 aa).

Residues 1-31 (MNNPRSVSPLVSPANHSDLLENQRQSGSGDF) are disordered. Over 1-140 (MNNPRSVSPL…LPEDKTWPFL (140 aa)) the chain is Cytoplasmic. Residues 20–29 (LENQRQSGSG) are compositionally biased toward polar residues. A phosphoserine mark is found at serine 77 and serine 85. The helical transmembrane segment at 141–161 (LRFPITSYGMCLGVSSQAIMW) threads the bilayer. Topologically, residues 162 to 185 (KTLATTEAEKFLHVTQVINHVLWW) are extracellular. Residues 186–206 (ISLLLLLAVSITYLFKTILFF) traverse the membrane as a helical segment. The Cytoplasmic portion of the chain corresponds to 207-220 (EAVRREFRHPIRVN). A helical transmembrane segment spans residues 221 to 241 (FFFAPLISILFLALGIPHSII). Topologically, residues 242 to 247 (SHLPST) are extracellular. A helical membrane pass occupies residues 248–268 (LWYFLMAPILFLEMKIYGQWM). Over 269–281 (SGGQRRLSKVANP) the chain is Cytoplasmic. The chain crosses the membrane as a helical span at residues 282 to 302 (TNHLSIVGNFAGALLGASMGL). The Extracellular segment spans residues 303–304 (KE). The chain crosses the membrane as a helical span at residues 305-325 (GPIFFFAIGLAYYLVLFVTLY). Topologically, residues 326-340 (QRLPTNETLPKELHP) are cytoplasmic. Residues 341–361 (VFFLFVAAPAVASMAWTKISA) traverse the membrane as a helical segment. Serine 362 is a topological domain (extracellular). The helical transmembrane segment at 363-383 (FDLGSRLAYFISLFLYFSLVC) threads the bilayer. The Cytoplasmic portion of the chain corresponds to 384 to 389 (RINLFR). Residues 390–410 (GFKFSLAWWAYTFPMTAVASA) form a helical membrane-spanning segment. Residues 411-424 (TIKYSDEVTGVATK) are Extracellular-facing. A helical transmembrane segment spans residues 425 to 445 (ILSVVMSGAATLTVIAVLGLT). Residues 446–519 (VMHAFVQRDL…VDSSTVQNSN (74 aa)) are Cytoplasmic-facing. The segment at 495–519 (PEDNQIDLESPPLVNVDSSTVQNSN) is disordered. The span at 510 to 519 (VDSSTVQNSN) shows a compositional bias: polar residues.

This sequence belongs to the SLAC1 S-type anion channel family. As to quaternary structure, homotrimer. As to expression, expressed in lateral root primordia and tap root tips.

Its subcellular location is the cell membrane. Functionally, slow, weak voltage-dependent S-type anion efflux channel involved in maintenance of anion homeostasis. The polypeptide is S-type anion channel SLAH2 (SLAH2) (Arabidopsis thaliana (Mouse-ear cress)).